The chain runs to 452 residues: Nuclear distribution protein PAC1 (452 aa).

The LisH domain maps to 12–44 (QKDELHKAILAYFSASGLSNTGAALREELGVGD). Residues 64 to 91 (TGVLRLQKKIMELESRLSSLQSELDSAT) adopt a coiled-coil conformation. WD repeat units lie at residues 117-158 (SHRN…RTVK), 160-200 (HTKA…KNIR), 204-245 (GHDH…CVKT), 248-287 (GHSDWIRDVEPSHDGRWLLSAGGDQTTRLWDASTAEHKAT), 290-350 (GHEH…LKTL), 352-391 (GHDNWIRALAFHPAGKYLLSVSDDKTIRCWDLTQDGRCVK), 396-435 (AHSHFATCLRWAPAPAKEQTNGEAKTNGIPKAGEKVINVR), and 437-452 (VIATGSADMNVRVFAS).

It belongs to the WD repeat LIS1/nudF family. In terms of assembly, self-associates. Interacts with NDL1 and dynein.

It is found in the cytoplasm. It localises to the cytoskeleton. The protein resides in the spindle pole. Positively regulates the activity of the minus-end directed microtubule motor protein dynein. May enhance dynein-mediated microtubule sliding by targeting dynein to the microtubule plus end. Required for nuclear migration during vegetative growth as well as development. Required for retrograde early endosome (EE) transport from the hyphal tip. Required for localization of dynein to the mitotic spindle poles. Recruits additional proteins to the dynein complex at SPBs. The protein is Nuclear distribution protein PAC1 of Tuber melanosporum (strain Mel28) (Perigord black truffle).